The sequence spans 445 residues: Histidine--tRNA ligase (445 aa).

This sequence belongs to the class-II aminoacyl-tRNA synthetase family. In terms of assembly, homodimer.

It is found in the cytoplasm. The enzyme catalyses tRNA(His) + L-histidine + ATP = L-histidyl-tRNA(His) + AMP + diphosphate + H(+). This chain is Histidine--tRNA ligase, found in Mycoplasma mobile (strain ATCC 43663 / 163K / NCTC 11711) (Mesomycoplasma mobile).